The chain runs to 78 residues: Dihydrofolate reductase type 2 (78 aa).

NADP(+)-binding positions include Lys32 and 66-69; that span reads VQIY. Ile68 contributes to the substrate binding site.

Homotetramer.

It carries out the reaction (6S)-5,6,7,8-tetrahydrofolate + NADP(+) = 7,8-dihydrofolate + NADPH + H(+). The protein operates within cofactor biosynthesis; tetrahydrofolate biosynthesis; 5,6,7,8-tetrahydrofolate from 7,8-dihydrofolate: step 1/1. Key enzyme in folate metabolism. Catalyzes an essential reaction for de novo glycine and purine synthesis, and for DNA precursor synthesis. This Escherichia coli protein is Dihydrofolate reductase type 2.